The chain runs to 253 residues: tRNA uridine(34) hydroxylase (253 aa).

One can recognise a Rhodanese domain in the interval 127–221; it reads RGRPLVLLDT…YFEEVGGEGY (95 aa). C181 (cysteine persulfide intermediate) is an active-site residue.

It belongs to the TrhO family.

It catalyses the reaction uridine(34) in tRNA + AH2 + O2 = 5-hydroxyuridine(34) in tRNA + A + H2O. Catalyzes oxygen-dependent 5-hydroxyuridine (ho5U) modification at position 34 in tRNAs. The polypeptide is tRNA uridine(34) hydroxylase (Xanthomonas oryzae pv. oryzae (strain MAFF 311018)).